A 973-amino-acid polypeptide reads, in one-letter code: Vacuolar membrane protease (973 aa).

Residues 1–15 are Cytoplasmic-facing; it reads MARQYSRTNPLGFTP. A helical membrane pass occupies residues 16-36; the sequence is WPVTIITALVYLALVIPLLVV. Topologically, residues 37-383 are vacuolar; sequence QHVVPSAPGS…STLAVFELHT (347 aa). Residues Asn-52 and Asn-115 are each glycosylated (N-linked (GlcNAc...) asparagine). Positions 167 and 179 each coordinate Zn(2+). Residue Glu-213 is the Proton acceptor of the active site. Zn(2+) is bound by residues Glu-214, Glu-239, and His-312. Residues 384–404 form a helical membrane-spanning segment; that stretch reads LFALSVTLLIVAPLVLLATSI. Topologically, residues 405 to 438 are cytoplasmic; it reads ALVRADRMYLFRSTARVPGSDDFDEGVSLQGVRG. Residues 439 to 459 form a helical membrane-spanning segment; the sequence is FFRFPFLLVIPTGVAVGLAYL. At 460 to 469 the chain is on the vacuolar side; the sequence is VTKINPYIIH. A helical membrane pass occupies residues 470 to 490; the sequence is SSEYAVWSMMISAWVFLAWFV. The Cytoplasmic segment spans residues 491-504; that stretch reads SRVADFARPSAFHR. The chain crosses the membrane as a helical span at residues 505–525; sequence VYVLTWMFVAEWVLLVIATVY. Topologically, residues 526–529 are vacuolar; sequence ENRY. Residues 530–550 traverse the membrane as a helical segment; that stretch reads GLAGGYFVFFALSGTFLATWI. Over 551–674 the chain is Cytoplasmic; the sequence is SYLELFALPR…GLPKWTWVLQ (124 aa). Residues 572-623 are disordered; the sequence is SRYASNHGSRLGTSSGEHGMDDAEDEEDDDGDDEDEARNVEEEPTESTSLLR. Residues 574-587 show a composition bias toward polar residues; sequence YASNHGSRLGTSSG. A compositionally biased stretch (acidic residues) spans 593–607; that stretch reads DAEDEEDDDGDDEDE. Residues 675–695 traverse the membrane as a helical segment; that stretch reads FLLSAPIVLILVGPLALLLTA. The Vacuolar portion of the chain corresponds to 696–708; the sequence is ALRQTAQDGSSPL. Residues 709-729 form a helical membrane-spanning segment; the sequence is FVYIAIAVLTTLLVTPLLPFI. Over 730 to 735 the chain is Cytoplasmic; the sequence is HRYTHH. Residues 736–756 form a helical membrane-spanning segment; the sequence is IPLFLLLVFTGTLIYNLVAFP. The Vacuolar segment spans residues 757 to 973; that stretch reads FSPSNRLKLF…LVEGSRRFEV (217 aa). N-linked (GlcNAc...) asparagine glycans are attached at residues Asn-803 and Asn-839.

It belongs to the peptidase M28 family. It depends on Zn(2+) as a cofactor.

The protein localises to the vacuole membrane. May be involved in vacuolar sorting and osmoregulation. This is Vacuolar membrane protease from Aspergillus clavatus (strain ATCC 1007 / CBS 513.65 / DSM 816 / NCTC 3887 / NRRL 1 / QM 1276 / 107).